The following is an 87-amino-acid chain: Phospholemman (87 aa).

An N-terminal signal peptide occupies residues 1 to 20 (MASLSHILVLWVGILTVVNA). The Extracellular segment spans residues 21 to 35 (EAPQEHDPFTYDYQS). A helical transmembrane segment spans residues 36–56 (LRIGGLIIAGILFILGILIVL). Topologically, residues 57–87 (SRRCRCKFNQQQSLGKMRSPHLAAQFSSESC) are cytoplasmic. Residue Cys60 is the site of S-palmitoyl cysteine attachment. Cys62 is subject to S-glutathionyl cysteine; alternate. A lipid anchor (S-palmitoyl cysteine; alternate) is attached at Cys62. Ser75 carries the phosphoserine; by PKA and PKC modification. Ser83 carries the post-translational modification Phosphoserine; by PKA.

Belongs to the FXYD family. Homotetramer. Monomer. Regulatory subunit of the sodium/potassium-transporting ATPase (NKA) which is composed of a catalytic alpha subunit, a non-catalytic beta subunit and an additional regulatory subunit. The monomeric form associates with NKA while the oligomeric form does not. Interacts with the catalytic alpha-1 subunit ATP1A1. Also interacts with the catalytic alpha-2 and alpha-3 subunits ATP1A2 and ATP1A3. Very little interaction with ATP1A1, ATP1A2 or ATP1A3 when phosphorylated at Ser-83. Interacts with the non-catalytic beta-1 subunit ATP1B1. Oxidative stress decreases interaction with ATP1A1 but increases interaction with ATP1B1. In terms of processing, major plasma membrane substrate for cAMP-dependent protein kinase (PKA) and protein kinase C (PKC) in several different tissues. Phosphorylated in response to insulin and adrenergic stimulation. Phosphorylation at Ser-83 stimulates sodium/potassium-transporting ATPase activity while the unphosphorylated form inhibits sodium/potassium-transporting ATPase activity. Phosphorylation increases tetramerization, decreases binding to ATP1A1 and reduces inhibition of ATP1A1 activity. Phosphorylation at Ser-75 leads to greatly reduced interaction with ATP1A1, ATP1A2 and ATP1A3. May be phosphorylated by DMPK. Palmitoylation increases half-life and stability and is enhanced upon phosphorylation at Ser-83 by PKA.

The protein localises to the cell membrane. It is found in the sarcolemma. Its subcellular location is the apical cell membrane. It localises to the membrane. The protein resides in the caveola. The protein localises to the T-tubule. In terms of biological role, associates with and regulates the activity of the sodium/potassium-transporting ATPase (NKA) which transports Na(+) out of the cell and K(+) into the cell. Inhibits NKA activity in its unphosphorylated state and stimulates activity when phosphorylated. Reduces glutathionylation of the NKA beta-1 subunit ATP1B1, thus reversing glutathionylation-mediated inhibition of ATP1B1. Contributes to female sexual development by maintaining the excitability of neurons which secrete gonadotropin-releasing hormone. This is Phospholemman from Sus scrofa (Pig).